We begin with the raw amino-acid sequence, 197 residues long: Imidazoleglycerol-phosphate dehydratase (197 aa).

This sequence belongs to the imidazoleglycerol-phosphate dehydratase family.

The protein localises to the cytoplasm. It carries out the reaction D-erythro-1-(imidazol-4-yl)glycerol 3-phosphate = 3-(imidazol-4-yl)-2-oxopropyl phosphate + H2O. Its pathway is amino-acid biosynthesis; L-histidine biosynthesis; L-histidine from 5-phospho-alpha-D-ribose 1-diphosphate: step 6/9. The chain is Imidazoleglycerol-phosphate dehydratase from Methylocella silvestris (strain DSM 15510 / CIP 108128 / LMG 27833 / NCIMB 13906 / BL2).